The following is a 233-amino-acid chain: Bcl-2-like protein 1 (233 aa).

Positions 4 to 24 match the BH4 motif; the sequence is SNRELVVDFLSYKLSQKGYSW. The disordered stretch occupies residues 29–71; sequence DVEENRTEAPEGTESEAETPSAINGNPSWHLADSPAVNGATGH. At Ser49 the chain carries Phosphoserine; by PLK3. Phosphoserine; by CDK1 is present on Ser62. A BH3 motif is present at residues 86-100; sequence VKQALREAGDEFELR. Residues 129 to 148 carry the BH1 motif; it reads ELFRDGVNWGRIVAFFSFGG. The short motif at 180–195 is the BH2 element; it reads PWIQENGGWDTFVELY. Residues 210–226 traverse the membrane as a helical segment; it reads FNRWFLTGMTLAGVVLL.

The protein belongs to the Bcl-2 family. As to quaternary structure, homodimer. Heterodimers with BAX, BAK or BCL2. Heterodimerization with BAX does not seem to be required for anti-apoptotic activity. Interacts with BCL2L11. Interacts with BAD. Interacts with SIVA1 isoform 1; the interaction inhibits the anti-apoptotic activity. Interacts with BECN1 and PGAM5. Interacts with IKZF3. Interacts with HEBP2. Interacts with BOP. Interacts with p53/TP53 and BBC3; interaction with BBC3 disrupts the interaction with p53/TP53. Interacts with DNM1L and CLTA; DNM1L and BCL2L1 may form a complex in synaptic vesicles that also contains clathrin and MFF. Interacts with ATP5F1A and ATP5F1B; the interactions mediate the association of BCL2L1 with the mitochondrial membrane ATP synthase F(1)F(0) ATP synthase. Interacts with VDAC1. Interacts (via the loop between motifs BH4 and BH3) with NLRP1 (via LRR repeats), but not with NLRP2, NLRP3, NLRP4, PYCARD, nor MEFV. Interacts with BCL2L11 (via BH3). Interacts with RNF183. Interacts with GIMAP3/IAN4. Interacts with GIMAP5 and HSPA8/HSC70; the interaction between HSPA8 and BCL2L1 is impaired in the absence of GIMAP5. Interacts with CLU (isoform 4); this interaction releases and activates BAX and promotes cell death. In terms of processing, proteolytically cleaved by caspases during apoptosis. The cleaved protein, lacking the BH4 motif, has pro-apoptotic activity. Post-translationally, phosphorylated on Ser-62 by CDK1. This phosphorylation is partial in normal mitotic cells, but complete in G2-arrested cells upon DNA-damage, thus promoting subsequent apoptosis probably by triggering caspases-mediated proteolysis. Phosphorylated by PLK3, leading to regulate the G2 checkpoint and progression to cytokinesis during mitosis. Phosphorylation at Ser-49 appears during the S phase and G2, disappears rapidly in early mitosis during prometaphase, metaphase and early anaphase, and re-appears during telophase and cytokinesis. Ubiquitinated by RNF183 during prolonged ER stress, leading to degradation by the proteosome.

It localises to the mitochondrion membrane. Its subcellular location is the nucleus membrane. The protein localises to the mitochondrion matrix. The protein resides in the cytoplasm. It is found in the cytoskeleton. It localises to the microtubule organizing center. Its subcellular location is the centrosome. The protein localises to the cytosol. The protein resides in the cytoplasmic vesicle. It is found in the secretory vesicle. It localises to the synaptic vesicle membrane. Functionally, potent inhibitor of cell death. Inhibits activation of caspases. Appears to regulate cell death by blocking the voltage-dependent anion channel (VDAC) by binding to it and preventing the release of the caspase activator, CYC1, from the mitochondrial membrane. Also acts as a regulator of G2 checkpoint and progression to cytokinesis during mitosis. Regulates presynaptic plasticity, including neurotransmitter release and recovery, number of axonal mitochondria as well as size and number of synaptic vesicle clusters. During synaptic stimulation, increases ATP availability from mitochondria through regulation of mitochondrial membrane ATP synthase F(1)F(0) activity and regulates endocytic vesicle retrieval in hippocampal neurons through association with DMN1L and stimulation of its GTPase activity in synaptic vesicles. May attenuate inflammation impairing NLRP1-inflammasome activation, hence CASP1 activation and IL1B release. The protein is Bcl-2-like protein 1 (BCL2L1) of Sus scrofa (Pig).